Consider the following 214-residue polypeptide: Octanoyltransferase (214 aa).

The BPL/LPL catalytic domain occupies 35–211 (KSNMNFIWLG…IIHEEFNFNF (177 aa)). Residues 75 to 82 (RGGEVTCH), 142 to 144 (SIG), and 155 to 157 (GFS) contribute to the substrate site. C173 serves as the catalytic Acyl-thioester intermediate.

Belongs to the LipB family.

Its subcellular location is the cytoplasm. The enzyme catalyses octanoyl-[ACP] + L-lysyl-[protein] = N(6)-octanoyl-L-lysyl-[protein] + holo-[ACP] + H(+). It participates in protein modification; protein lipoylation via endogenous pathway; protein N(6)-(lipoyl)lysine from octanoyl-[acyl-carrier-protein]: step 1/2. Functionally, catalyzes the transfer of endogenously produced octanoic acid from octanoyl-acyl-carrier-protein onto the lipoyl domains of lipoate-dependent enzymes. Lipoyl-ACP can also act as a substrate although octanoyl-ACP is likely to be the physiological substrate. The sequence is that of Octanoyltransferase from Prochlorococcus marinus subsp. pastoris (strain CCMP1986 / NIES-2087 / MED4).